We begin with the raw amino-acid sequence, 671 residues long: Chitin biosynthesis protein CHS5 (671 aa).

Residues 78–168 (KPESPVLKIV…EKVILRTHKM (91 aa)) form the Fibronectin type-III domain. The 97-residue stretch at 166-262 (HKMTDMSGIT…RIVGVRGFYL (97 aa)) folds into the BRCT domain. A disordered region spans residues 280-671 (EELSYSKENE…KKNKKKGKKK (392 aa)). Thr305 carries the phosphothreonine modification. The segment covering 311–321 (ASPNDNESNPS) has biased composition (polar residues). Residues 322 to 332 (EAKEQGEKSGH) are compositionally biased toward basic and acidic residues. 5 positions are modified to phosphoserine: Ser338, Ser362, Ser365, Ser383, and Ser384. Polar residues predominate over residues 349–365 (ALENETTIETVNPSVRS). A compositionally biased stretch (basic and acidic residues) spans 409–419 (KSEDTDTHSNE). Positions 434 to 443 (NNITTESAGE) are enriched in polar residues. Residues 461–486 (EIETPEVNESIEDANEPAEDSNEPVE) are compositionally biased toward acidic residues. A compositionally biased stretch (basic and acidic residues) spans 487–521 (DSNKPVKDSNKPVEDSNKPVEDSNKPVEDSNKPVE). Acidic residues predominate over residues 522 to 538 (DANEPVEDTSEPVEDAG). Residues 542 to 551 (QETNEFTTDI) are compositionally biased toward polar residues. 2 positions are modified to phosphoserine: Ser573 and Ser579. The segment covering 581–591 (EDVKPEEKGSE) has biased composition (basic and acidic residues). Lys584 participates in a covalent cross-link: Glycyl lysine isopeptide (Lys-Gly) (interchain with G-Cter in ubiquitin). Phosphoserine is present on Ser590. Residues 606-620 (GESTTHQKTEASASL) show a composition bias toward polar residues. The segment covering 627–638 (EEQETTEAEVNT) has biased composition (acidic residues). Over residues 657–671 (NKKKNKKNKKKGKKK) the composition is skewed to basic residues.

The protein belongs to the CHS5 family. In terms of assembly, component of the CHS5/6 complex composed of the 4 CHAPS proteins BCH1, BCH2, BUD7, and CHS6 as well as at least CHS5 and GTP-bound ARF1. The complex interacts with the cargo protein CHS3.

The protein localises to the golgi apparatus. Its subcellular location is the trans-Golgi network membrane. Its function is as follows. Component of the CHS5/6 complex which mediates export of specific cargo proteins, including chitin synthase CHS3. Also involved in targeting FUS1 to sites of polarized growth. The chain is Chitin biosynthesis protein CHS5 (CHS5) from Saccharomyces cerevisiae (strain ATCC 204508 / S288c) (Baker's yeast).